The primary structure comprises 234 residues: UPF0309 protein lmo0025 (234 aa).

The SIS domain maps to 31–205 (VADSIMNDGI…ELMLEKGYTP (175 aa)).

The protein belongs to the UPF0309 family.

The chain is UPF0309 protein lmo0025 from Listeria monocytogenes serovar 1/2a (strain ATCC BAA-679 / EGD-e).